The following is a 118-amino-acid chain: Nitrogenase-stabilizing/protective protein NifW (118 aa).

The protein belongs to the NifW family. As to quaternary structure, homotrimer; associates with NifD.

May protect the nitrogenase Fe-Mo protein from oxidative damage. This Rhodopseudomonas palustris (strain BisB5) protein is Nitrogenase-stabilizing/protective protein NifW.